Reading from the N-terminus, the 220-residue chain is UPF0758 protein CKO_05095 (220 aa).

The region spanning 98–220 (ALLSPEMTRE…YVSFAERGWI (123 aa)) is the MPN domain. Zn(2+) contacts are provided by histidine 169, histidine 171, and aspartate 182. Residues 169 to 182 (HNHPSGCAEPSKAD) carry the JAMM motif motif.

Belongs to the UPF0758 family. YicR subfamily.

The polypeptide is UPF0758 protein CKO_05095 (Citrobacter koseri (strain ATCC BAA-895 / CDC 4225-83 / SGSC4696)).